Here is a 378-residue protein sequence, read N- to C-terminus: uncharacterized protein (378 aa).

A compositionally biased stretch (basic residues) spans methionine 1–lysine 11. Positions methionine 1–glycine 23 are disordered.

This is an uncharacterized protein from Caenorhabditis elegans.